The following is a 496-amino-acid chain: Tripartite motif-containing protein 30A (496 aa).

The segment at 15-59 (CPICLELLKEPVSADCNHSFCRACITLNYESNRNTDGKGNCPVCR) adopts an RING-type zinc-finger fold. A B box-type zinc finger spans residues 91-132 (QKVNICAQHGEKLRLFCRKDMMVICWLCERSQEHRGHQTALI). Residues Cys-96, His-99, Cys-118, and His-124 each coordinate Zn(2+). Residues 173-239 (NQIQINVENV…RDLISDVEHH (67 aa)) are a coiled coil. Residues 205 to 210 (KKEKKE) form a highly hydrophilic region. The Nuclear localization signal signature appears at 268-276 (TVPQKRKRT). Residues 281–496 (DLKGMLQVYQ…EPMTICGPPS (216 aa)) enclose the B30.2/SPRY domain.

As to quaternary structure, homomultimer. Interacts with NR2C2/TAK1, TAB2 and TAB3. Does not interact with NLRP3, NLRC4 or TAB1. In terms of tissue distribution, highly expressed in spleen and lymph nodes (at protein level).

It localises to the cytoplasm. Its subcellular location is the nucleus. Trans-acting factor that regulates gene expression of interleukin 2 receptor alpha chain. May affect IL2R-alpha expression through cis-acting negative regulatory elements or through competition with proteins that bind to enhancer or activator sequences. Negatively regulates Toll-like receptor (TLR)-mediated activation of NFKB by promoting degradation of TAB2 and TAB3 and preventing TRAF6 autoubiquitination. Negatively regulates production of reactive oxygen species (ROS) which inhibits activation of the NLRP3 inflammasome complex. This, in turn, regulates activation of CASP1 and subsequent cleavage of IL1B and IL18. No activity detected against a range of retroviruses including a number of lentiviruses, gammaretroviruses and betaretroviruses. This chain is Tripartite motif-containing protein 30A (Trim30a), found in Mus musculus (Mouse).